A 101-amino-acid chain; its full sequence is Large ribosomal subunit protein uL23 (101 aa).

It belongs to the universal ribosomal protein uL23 family. In terms of assembly, part of the 50S ribosomal subunit. Contacts protein L29, and trigger factor when it is bound to the ribosome.

One of the early assembly proteins it binds 23S rRNA. One of the proteins that surrounds the polypeptide exit tunnel on the outside of the ribosome. Forms the main docking site for trigger factor binding to the ribosome. This chain is Large ribosomal subunit protein uL23, found in Rhodococcus erythropolis (strain PR4 / NBRC 100887).